Consider the following 286-residue polypeptide: Probable syntaxin-7B (286 aa).

Over 1-257 (MTDRQPLISK…YVYKSSYRKK (257 aa)) the chain is Cytoplasmic. Over residues 97–107 (LSTSNKKESSH) the composition is skewed to basic and acidic residues. The interval 97 to 160 (LSTSNKKESS…TNNNNNNNNN (64 aa)) is disordered. Residues 114–160 (QQQQQQQNNGNSNNNGYNTRGGYNQQQQQQQQQYNDYTNNNNNNNNN) are compositionally biased toward low complexity. A t-SNARE coiled-coil homology domain is found at 185-247 (NRILDERNAN…EDAVVELEKA (63 aa)). The chain crosses the membrane as a helical; Anchor for type IV membrane protein span at residues 258–278 (MIIFVICLLVTLVAVGIFLAI). Topologically, residues 279 to 286 (YYGVIKKK) are vesicular.

Belongs to the syntaxin family.

It is found in the membrane. The chain is Probable syntaxin-7B (syn7B) from Dictyostelium discoideum (Social amoeba).